The primary structure comprises 185 residues: Elongation factor P (185 aa).

Belongs to the elongation factor P family.

The protein resides in the cytoplasm. The protein operates within protein biosynthesis; polypeptide chain elongation. Functionally, involved in peptide bond synthesis. Stimulates efficient translation and peptide-bond synthesis on native or reconstituted 70S ribosomes in vitro. Probably functions indirectly by altering the affinity of the ribosome for aminoacyl-tRNA, thus increasing their reactivity as acceptors for peptidyl transferase. This chain is Elongation factor P, found in Moorella thermoacetica (strain ATCC 39073 / JCM 9320).